The chain runs to 102 residues: Integration host factor subunit alpha (102 aa).

Belongs to the bacterial histone-like protein family. As to quaternary structure, heterodimer of an alpha and a beta chain.

In terms of biological role, this protein is one of the two subunits of integration host factor, a specific DNA-binding protein that functions in genetic recombination as well as in transcriptional and translational control. The polypeptide is Integration host factor subunit alpha (Buchnera aphidicola subsp. Acyrthosiphon pisum (strain 5A)).